Here is a 480-residue protein sequence, read N- to C-terminus: Probable G-protein coupled receptor Mth-like 6 (480 aa).

Positions 1 to 20 (MLLNILAIILVFVISSQSEA) are cleaved as a signal peptide. At 21 to 202 (VIPGCDYFDT…LEHVYIPKSM (182 aa)) the chain is on the extracellular side. Cystine bridges form between C25/C78, C80/C85, C89/C179, and C90/C101. N-linked (GlcNAc...) asparagine glycosylation is present at N40. 2 N-linked (GlcNAc...) asparagine glycosylation sites follow: N160 and N170. A helical membrane pass occupies residues 203 to 225 (PAVPQVGTISMVGCILTIAVYLY). The Cytoplasmic portion of the chain corresponds to 226–231 (IKKLRN). Residues 232–254 (LLGKCFICYVFCKFVQYLIWAGG) traverse the membrane as a helical segment. At 255-263 (DLNLWNNIC) the chain is on the extracellular side. The chain crosses the membrane as a helical span at residues 264-283 (SLAGYTNYFFALASHFWLSV). Topologically, residues 284–303 (MSHQIWKNLRLINRDERSYH) are cytoplasmic. Residues 304–326 (FLIYNIYGWGTPAIMTAITYLVD) form a helical membrane-spanning segment. The Extracellular portion of the chain corresponds to 327–356 (WAWEDRPDKLNWIPGVGLYRCWINTYDWSA). Residues 357 to 379 (MIYLYGPMLILSLFNVVTFILTV) form a helical membrane-spanning segment. The Cytoplasmic portion of the chain corresponds to 380–405 (NHIMKIKSSVKSSTQQQRKCIQNNDF). A helical transmembrane segment spans residues 406 to 428 (LLYLRLSVMMGVTGISEVITYFV). The Extracellular segment spans residues 429-437 (KRHKFWRQV). The chain crosses the membrane as a helical span at residues 438–457 (LRVPNFFHLGSGIVVFVLFI). Over 458–480 (LKRSTFQMIMERISGPRRQQPAS) the chain is Cytoplasmic.

The protein belongs to the G-protein coupled receptor 2 family. Mth subfamily.

Its subcellular location is the cell membrane. This chain is Probable G-protein coupled receptor Mth-like 6 (mthl6), found in Drosophila melanogaster (Fruit fly).